The chain runs to 503 residues: Transforming protein rel polyprotein (503 aa).

The RHD domain occupies 16–305 (PYIEIFEQPR…GNKAKRQRST (290 aa)). Position 275 is a phosphoserine; by host PKA (Ser-275). Disordered regions lie at residues 286–306 (RYLP…RSTL) and 318–342 (AVTE…KEPN). The Nuclear localization signal signature appears at 298 to 303 (KAKRQR).

It is found in the host cytoplasm. Its function is as follows. This transforming protein appears to have a protein-kinase activity. The sequence is that of Transforming protein rel polyprotein (V-REL) from Galliformes.